We begin with the raw amino-acid sequence, 256 residues long: DNA repair protein RecO (256 aa).

The protein belongs to the RecO family.

Involved in DNA repair and RecF pathway recombination. This Rhizobium johnstonii (strain DSM 114642 / LMG 32736 / 3841) (Rhizobium leguminosarum bv. viciae) protein is DNA repair protein RecO.